The primary structure comprises 270 residues: Homeobox protein Hox-D12 (270 aa).

Residues 102–122 (APEAAAGPEERGRTRPSFAPE) are disordered. The homeobox DNA-binding region spans 202–261 (ARKKRKPYTKQQIAELENEFLVNEFINRQKRKELSNRLNLSDQQVKIWFQNRRMKKKRVV).

Belongs to the Abd-B homeobox family.

Its subcellular location is the nucleus. Sequence-specific transcription factor which is part of a developmental regulatory system that provides cells with specific positional identities on the anterior-posterior axis. The protein is Homeobox protein Hox-D12 (HOXD12) of Homo sapiens (Human).